A 242-amino-acid polypeptide reads, in one-letter code: Caffeoyl-CoA O-methyltransferase 2 (242 aa).

Lys16 contributes to the substrate binding site. Residues Thr58, Glu80, 82-83 (GV), Ser88, Asp106, and Ala135 each bind S-adenosyl-L-methionine. Asp158 is a binding site for substrate. Asp158 serves as a coordination point for a divalent metal cation. Asp160 contributes to the S-adenosyl-L-methionine binding site. Residues Asp184 and Asn185 each coordinate a divalent metal cation. Substrate is bound at residue Asn189.

It belongs to the class I-like SAM-binding methyltransferase superfamily. Cation-dependent O-methyltransferase family. CCoAMT subfamily. A divalent metal cation serves as cofactor. Mostly expressed in petal limbs and tubes, and, at low levels, in stems, roots and leaves.

The protein localises to the cytoplasm. It is found in the cytosol. The enzyme catalyses (E)-caffeoyl-CoA + S-adenosyl-L-methionine = (E)-feruloyl-CoA + S-adenosyl-L-homocysteine + H(+). It catalyses the reaction (E)-5-hydroxyferuloyl-CoA + S-adenosyl-L-methionine = (E)-sinapoyl-CoA + S-adenosyl-L-homocysteine + H(+). It participates in aromatic compound metabolism; phenylpropanoid biosynthesis. In terms of biological role, involved in the production of floral volatile phenylpropanoids in flowers of fragrant cultivars (e.g. cv. Mitchell and cv. V26) from cinnamic acid, a common precursor with the anthocyanin biosynthesis pathway involved in flower pigmentation. Methylates caffeoyl-CoA to feruloyl-CoA, also able to methylate 5-hydroxyferuloyl-CoA. The chain is Caffeoyl-CoA O-methyltransferase 2 from Petunia hybrida (Petunia).